Reading from the N-terminus, the 321-residue chain is uncharacterized protein (321 aa).

Tyr-49 acts as the Proton donor in catalysis. His-106 contributes to the substrate binding site.

The protein belongs to the aldo/keto reductase family.

This is an uncharacterized protein from Caenorhabditis elegans.